Here is a 403-residue protein sequence, read N- to C-terminus: FAD-dependent monooxygenase tazP (403 aa).

Residues Gly-75, Arg-144, Asp-354, and Ala-367 each coordinate FAD.

Belongs to the paxM FAD-dependent monooxygenase family. Requires FAD as cofactor.

It participates in secondary metabolite biosynthesis. In terms of biological role, FAD-dependent monooxygenase; part of the gene cluster that mediates the biosynthesis of azaterrilone A and other azaphilones, a class of fungal metabolites characterized by a highly oxygenated pyrano-quinone bicyclic core and exhibiting a broad range of bioactivities. The first step of the pathway begins with the non-reducing polyketide synthase tazA that assembles one acetyl-CoA starter unit, five malonyl-CoA units, and catalyzes a series of Claisen condensations, methylation, PT-mediated cyclization, and finally releases the first hexaketide precursor through the R-domain. The tazA product then undergoes reduction on its terminal ketone and the following pyran-ring formation by yet undetermined enzyme(s). Dehydration and enoyl reduction, possibly involving the trans-enoyl reductase tazE leads to the next intermediate. TazD is predicted as an acetyltransferase and might catalyze the acetylation steps leading to the synthesis of azaterrilone A. Azaterrilone A is not the final product of the taz pathway and both the highly reducing polyketide synthase tazB and the dual enzyme tazHJ catalyze late steps of the pathway, leading to the production of the 2 final stereoisomers that contain additional polyketide modification whose structures have still to be determined. The chain is FAD-dependent monooxygenase tazP from Aspergillus terreus (strain NIH 2624 / FGSC A1156).